A 56-amino-acid chain; its full sequence is Large ribosomal subunit protein bL33 (56 aa).

The protein belongs to the bacterial ribosomal protein bL33 family.

The polypeptide is Large ribosomal subunit protein bL33 (Dichelobacter nodosus (strain VCS1703A)).